Here is a 565-residue protein sequence, read N- to C-terminus: MRSDTIKTGFEKAPHRSLLKATGTIHGKSDYQKPFIGICNSFNELIPGHAHLQELGRIAKEEVRKAGGVPFEFNTIGVCDGIAMGHIGMRYSLASRELIADSVETVAEAHRLDGLVCIPNCDKITPGMMMAALRINIPVIFVSGGPMKAGHTPSGKTVDLISVFEAVGQRSTGEISEEELETIEENACPGCGSCSGMFTANSMNCLSEALGFALPGNGTILAGDPRRNELVREASRRIIDLVEKNVRPRDILSRSALLNAFALDFAMGGSTNTILHTLAIANEAELDFDFSELNGLSAKTPYICKVSPATMDVHIEDVDRAGGISAILHELSKIDGLLDLSVPTVTGKSLGENIKNAEVLNRKVIRSIEDPYSATGGLCVLYGNLAPQGAVIKTGAVSAPMMHHSGPAKVYDSQDDAIAGIMGGDVHSGDVVVIRYEGPKGGPGMPEMLSPTSAIMGRGLGDSVALITDGRFSGGSRGACIGHVSPEAAVKGPIAALRNGDTVTIDIPGRSITMEVSDEEIADRIAGLPAFVPKIRKGYLARYAEMVTSANTGAILKTPVSCEPK.

Asp-80 contributes to the Mg(2+) binding site. Position 121 (Cys-121) interacts with [2Fe-2S] cluster. Asp-122 and Lys-123 together coordinate Mg(2+). An N6-carboxylysine modification is found at Lys-123. Residue Cys-194 coordinates [2Fe-2S] cluster. Residue Glu-447 participates in Mg(2+) binding. Ser-473 acts as the Proton acceptor in catalysis.

It belongs to the IlvD/Edd family. As to quaternary structure, homodimer. [2Fe-2S] cluster serves as cofactor. The cofactor is Mg(2+).

The enzyme catalyses (2R)-2,3-dihydroxy-3-methylbutanoate = 3-methyl-2-oxobutanoate + H2O. It carries out the reaction (2R,3R)-2,3-dihydroxy-3-methylpentanoate = (S)-3-methyl-2-oxopentanoate + H2O. It participates in amino-acid biosynthesis; L-isoleucine biosynthesis; L-isoleucine from 2-oxobutanoate: step 3/4. Its pathway is amino-acid biosynthesis; L-valine biosynthesis; L-valine from pyruvate: step 3/4. Functions in the biosynthesis of branched-chain amino acids. Catalyzes the dehydration of (2R,3R)-2,3-dihydroxy-3-methylpentanoate (2,3-dihydroxy-3-methylvalerate) into 2-oxo-3-methylpentanoate (2-oxo-3-methylvalerate) and of (2R)-2,3-dihydroxy-3-methylbutanoate (2,3-dihydroxyisovalerate) into 2-oxo-3-methylbutanoate (2-oxoisovalerate), the penultimate precursor to L-isoleucine and L-valine, respectively. This Chlorobium luteolum (strain DSM 273 / BCRC 81028 / 2530) (Pelodictyon luteolum) protein is Dihydroxy-acid dehydratase.